The chain runs to 287 residues: Hypersensitive-induced response protein-like protein 2 (287 aa).

Residue Gly-2 is the site of N-myristoyl glycine attachment.

Functionally, positive regulator of hypersensitive response (HR)-like cell death. May be involved in potassium ion channel regulation. This is Hypersensitive-induced response protein-like protein 2 (HIRL2) from Oryza sativa subsp. japonica (Rice).